Reading from the N-terminus, the 213-residue chain is Uracil phosphoribosyltransferase (213 aa).

5-phospho-alpha-D-ribose 1-diphosphate-binding positions include Arg-78, Arg-103, and 130–138 (DPMLATGGT). Uracil-binding positions include Ile-197 and 202-204 (GDA). A 5-phospho-alpha-D-ribose 1-diphosphate-binding site is contributed by Asp-203.

Belongs to the UPRTase family. The cofactor is Mg(2+).

The catalysed reaction is UMP + diphosphate = 5-phospho-alpha-D-ribose 1-diphosphate + uracil. Its pathway is pyrimidine metabolism; UMP biosynthesis via salvage pathway; UMP from uracil: step 1/1. With respect to regulation, allosterically activated by GTP. Catalyzes the conversion of uracil and 5-phospho-alpha-D-ribose 1-diphosphate (PRPP) to UMP and diphosphate. In Nocardioides sp. (strain ATCC BAA-499 / JS614), this protein is Uracil phosphoribosyltransferase.